Here is a 161-residue protein sequence, read N- to C-terminus: Small ribosomal subunit protein eS6 (161 aa).

The segment at 119–161 (VLLGEEEPEDADDDGDSDVDADEATDTDAGSEEDNDDDIADAE) is disordered. Positions 122–161 (GEEEPEDADDDGDSDVDADEATDTDAGSEEDNDDDIADAE) are enriched in acidic residues.

Belongs to the eukaryotic ribosomal protein eS6 family.

The polypeptide is Small ribosomal subunit protein eS6 (Haloquadratum walsbyi (strain DSM 16790 / HBSQ001)).